Reading from the N-terminus, the 123-residue chain is MMGLAKTLLLASQLTAVVVATPTINNDNELTTKWPVCVKPTKVLDERIPTVKRGPVETPLPTQPGMVNNCNKFCWVQAGNKCYQVAMENHISLADFLKWNPGAGSDCRTLWANTYACVGVSKK.

Residues 1–20 (MMGLAKTLLLASQLTAVVVA) form the signal peptide. The LysM domain occupies 72-118 (KFCWVQAGNKCYQVAMENHISLADFLKWNPGAGSDCRTLWANTYACV).

This sequence belongs to the secreted LysM effector family.

Its function is as follows. Might have a role in sequestration of chitin oligosaccharides (breakdown products of fungal cell walls that are released during invasion and act as triggers of host immunity) to dampen host defense. The chain is Secreted LysM effector Lys1 from Pochonia chlamydosporia (strain 123) (Metacordyceps chlamydosporia).